The following is a 347-amino-acid chain: Nuclear distribution protein nudE-like 1 (347 aa).

Residues 28–190 are a coiled coil; the sequence is QSFQEARDEL…LAVRERQQEV (163 aa). Residues 56-166 are self-association; that stretch reads VQAEQRNRDL…LDEKESLLVS (111 aa). Positions 64–189 are interaction with KATNB1; the sequence is DLQADNQRLK…ELAVRERQQE (126 aa). Residues 114–133 are required for interaction with PAFAH1B1; sequence YVRELEQANDDLERAKRATI. The interval 175-347 is interaction with CENPF; it reads RDLRQELAVR…SAPGMLPLSV (173 aa). Residues 189–256 are interaction with YWHAE; the sequence is EVTRKSAPSS…SARISALNIV (68 aa). The tract at residues 191–347 is interaction with NEFL; sequence TRKSAPSSPT…SAPGMLPLSV (157 aa). Residues 195-256 are interaction with KATNA1; sequence APSSPTLDCE…SARISALNIV (62 aa). At Ser215 the chain carries Phosphoserine. Thr219 carries the post-translational modification Phosphothreonine; by CDK1 and MAPK1. Ser231 carries the phosphoserine modification. The interaction with DISC1 stretch occupies residues 241–280; sequence TSPLTPSARISALNIVGDLLRKVGALESKLAACRNFAKDQ. Position 242 is a phosphoserine; by CDK1 (Ser242). Thr245 bears the Phosphothreonine; by CDK1 and MAPK1 mark. A required for localization to the centrosome and interaction with dynein, dynactin, tubulin gamma, PCM1 and PCNT region spans residues 256 to 291; sequence VGDLLRKVGALESKLAACRNFAKDQASRKSYISGNV. Residue Cys273 is the site of S-palmitoyl cysteine; by ZDHHC2, ZDHHC3 and ZDHHC7 attachment. Positions 314–347 are disordered; the sequence is KGAVNGFDPAPPPPDPGLGSSRPSSAPGMLPLSV. The residue at position 346 (Ser346) is a Phosphoserine.

Belongs to the nudE family. In terms of assembly, self-associates. Interacts with DISC1, dynein, dynactin, tubulin gamma, KATNA1, KATNB1, microtubules, PAFAH1B1, PCM1, PCNT, and YWHAE. Interacts directly with NEFL and indirectly with NEFH. Interacts (via C-terminus) with CENPF. Interacts with ZNF365. Interacts with PLEKHM1 (via N- and C-terminus). Interacts with GTP-bound RAB9A; the interaction may lead to RAB9A-dynein motor tethering. Post-translationally, phosphorylated in mitosis. Can be phosphorylated by CDK1, CDK5 and MAPK1. Phosphorylation by CDK5 promotes interaction with KATNA1 and YWHAE. Palmitoylation at Cys-273 reduces affinity for dynein.

The protein resides in the cytoplasm. It is found in the cytoskeleton. Its subcellular location is the microtubule organizing center. It localises to the centrosome. The protein localises to the chromosome. The protein resides in the centromere. It is found in the kinetochore. Its subcellular location is the spindle. Its function is as follows. Required for organization of the cellular microtubule array and microtubule anchoring at the centrosome. May regulate microtubule organization at least in part by targeting the microtubule severing protein KATNA1 to the centrosome. Also positively regulates the activity of the minus-end directed microtubule motor protein dynein. May enhance dynein-mediated microtubule sliding by targeting dynein to the microtubule plus ends. Required for several dynein- and microtubule-dependent processes such as the maintenance of Golgi integrity, the centripetal motion of secretory vesicles and the coupling of the nucleus and centrosome. Also required during brain development for the migration of newly formed neurons from the ventricular/subventricular zone toward the cortical plate. Required for mitosis in some cell types but appears to be dispensible for mitosis in cortical neuronal progenitors, which instead requires NDE1. Facilitates the polymerization of neurofilaments from the individual subunits NEFH and NEFL. Positively regulates lysosome peripheral distribution and ruffled border formation in osteoclasts. Plays a role, together with DISC1, in the regulation of neurite outgrowth. May act as a RAB9A/B effector that tethers RAB9-associated late endosomes to the dynein motor for their retrograde transport to the trans-Golgi network. The sequence is that of Nuclear distribution protein nudE-like 1 (NDEL1) from Macaca fascicularis (Crab-eating macaque).